Here is a 76-residue protein sequence, read N- to C-terminus: Large ribosomal subunit protein uL29 (76 aa).

This sequence belongs to the universal ribosomal protein uL29 family.

This Corynebacterium kroppenstedtii (strain DSM 44385 / JCM 11950 / CIP 105744 / CCUG 35717) protein is Large ribosomal subunit protein uL29.